Consider the following 350-residue polypeptide: Ferredoxin--NADP reductase (350 aa).

Positions 49, 57, 62, 102, 136, 303, and 344 each coordinate FAD.

The protein belongs to the ferredoxin--NADP reductase type 2 family. As to quaternary structure, homodimer. FAD is required as a cofactor.

The catalysed reaction is 2 reduced [2Fe-2S]-[ferredoxin] + NADP(+) + H(+) = 2 oxidized [2Fe-2S]-[ferredoxin] + NADPH. This is Ferredoxin--NADP reductase from Granulibacter bethesdensis (strain ATCC BAA-1260 / CGDNIH1).